The sequence spans 266 residues: Respiratory nitrate reductase beta chain (266 aa).

4Fe-4S ferredoxin-type domains are found at residues Val3–Asn32 and Trp30–Glu61. The [4Fe-4S] cluster site is built by Cys12, Cys15, Cys18, Cys22, Cys39, Cys42, and Cys47. [3Fe-4S] cluster is bound by residues Cys51 and Cys73. The [4Fe-4S] cluster site is built by Cys77, Cys81, Cys84, Cys96, and Cys100.

As to quaternary structure, heterotrimer composed of an alpha, a beta and a gamma chain. Alpha and beta are catalytic chains; gamma chains are involved in binding the enzyme complex to the cytoplasmic membrane. The cofactor is [4Fe-4S] cluster. [3Fe-4S] cluster serves as cofactor.

Its subcellular location is the cell membrane. It is found in the cytoplasm. It catalyses the reaction nitrate + a quinol = a quinone + nitrite + H2O. With respect to regulation, inhibited by micromolar concentrations of azide. The nitrate reductase enzyme complex allows Bradyrhizobium sp. USDA 3045 to use nitrate as an electron acceptor during anaerobic growth. The beta chain is an electron transfer unit containing four cysteine clusters involved in the formation of iron-sulfur centers. Electrons are transferred from the gamma chain to the molybdenum cofactor of the alpha subunit. The chain is Respiratory nitrate reductase beta chain (narH) from Bradyrhizobium sp.